We begin with the raw amino-acid sequence, 435 residues long: Transmembrane protease serine 4 (435 aa).

Residues 1–30 (MESDSGQPLNNRDIVPFRKPRRPQETFKKV) lie on the Cytoplasmic side of the membrane. Residues 31 to 51 (GIPIIAVLLSLIALVIVALLI) traverse the membrane as a helical; Signal-anchor for type II membrane protein segment. Topologically, residues 52 to 435 (KVILDKYYFI…WIYNVRKSEM (384 aa)) are extracellular. One can recognise an LDL-receptor class A domain in the interval 59–101 (YFICGSPLTFIQRGQLCDGHLDCASGEDEEHCVKDFPEKPGVA). Cystine bridges form between cysteine 62/cysteine 81, cysteine 75/cysteine 90, cysteine 125/cysteine 181, cysteine 138/cysteine 191, cysteine 194/cysteine 308, cysteine 228/cysteine 244, cysteine 354/cysteine 370, and cysteine 381/cysteine 408. The 101-residue stretch at 102 to 202 (VRLSKDRSTL…DCGKSLKTPR (101 aa)) folds into the SRCR domain. Asparagine 128 and asparagine 176 each carry an N-linked (GlcNAc...) asparagine glycan. The Peptidase S1 domain occupies 203–432 (VVGGVEAPVD…YLNWIYNVRK (230 aa)). Catalysis depends on charge relay system residues histidine 243 and aspartate 288. Serine 385 acts as the Charge relay system in catalysis.

The protein belongs to the peptidase S1 family. Post-translationally, proteolytically processed; probably by an autocatalytic mechanism.

Its subcellular location is the cell membrane. The protein resides in the secreted. Its function is as follows. Plasma membrane-anchored serine protease that directly induces processing of pro-uPA/PLAU into the active form through proteolytic activity. Seems to be capable of activating ENaC. This chain is Transmembrane protease serine 4, found in Mus musculus (Mouse).